The chain runs to 474 residues: MTGDAVGRIVRVTGSVVDVEFSRNNLPGVFNALKTRVNRSGKEIEITLEVAQHLGDDLVRTVAMQSTDGLIRGQEVLDTGGHITVPVGDATKGRVFNVVGEVLNSNGEDIKFDEYWSIHRKPPEFSLLESKTQLFETGIKVIDLLTPYVQGGKIGLFGGAGVGKTVLIQEMIQRVAQDHGGVSVFAGVGERTREGNDLIREMQDAGVFDKTALVFGQMDEPPGTRLRVALSALTMAEYFRDVQKQDVLLFIDNIFRFTQAGSEVSTLLGRIPSAVGYQPNLADEMGVLQERITSTRGHSITSLQAIYVPADDYTDPAPATTFAHLDATTELSREIASKGLYPAVDPLASTSRILDPKYIGKDHYRVAVTVKQILQRDKELREIIAILGIDELSEEDRVTVARARRIEQFLSQNTYMAKKFTGVDGSTVPLQETIDGFDAICRGDCDHIPEQAFFNVGGLEDVERKWSKLQKELG.

158 to 165 contributes to the ATP binding site; it reads GGAGVGKT.

This sequence belongs to the ATPase alpha/beta chains family. In terms of assembly, F-type ATPases have 2 components, CF(1) - the catalytic core - and CF(0) - the membrane proton channel. CF(1) has five subunits: alpha(3), beta(3), gamma(1), delta(1), epsilon(1). CF(0) has three main subunits: a(1), b(2) and c(9-12). The alpha and beta chains form an alternating ring which encloses part of the gamma chain. CF(1) is attached to CF(0) by a central stalk formed by the gamma and epsilon chains, while a peripheral stalk is formed by the delta and b chains.

It is found in the cell membrane. The enzyme catalyses ATP + H2O + 4 H(+)(in) = ADP + phosphate + 5 H(+)(out). In terms of biological role, produces ATP from ADP in the presence of a proton gradient across the membrane. The catalytic sites are hosted primarily by the beta subunits. The chain is ATP synthase subunit beta from Tropheryma whipplei (strain Twist) (Whipple's bacillus).